Consider the following 115-residue polypeptide: Integration host factor subunit alpha (115 aa).

The protein belongs to the bacterial histone-like protein family. As to quaternary structure, heterodimer of an alpha and a beta chain.

Its function is as follows. This protein is one of the two subunits of integration host factor, a specific DNA-binding protein that functions in genetic recombination as well as in transcriptional and translational control. The protein is Integration host factor subunit alpha of Burkholderia pseudomallei (strain K96243).